The sequence spans 1387 residues: Kinesin-like protein KIF15 (1387 aa).

The interval 1–23 (MAPGCKSELRNVTNSHSNQPSNE) is disordered. Positions 10-22 (RNVTNSHSNQPSN) are enriched in polar residues. The region spanning 26 to 363 (AIKVFVRIRP…LNFAQRAKLI (338 aa)) is the Kinesin motor domain. 109 to 116 (GQTGSGKT) provides a ligand contact to ATP. Positions 368–1132 (VVNEDTQGNV…LKMRQLEHVM (765 aa)) form a coiled coil. At S568 the chain carries Phosphoserine. Residue K1009 is modified to N6-acetyllysine. A phosphoserine mark is found at S1141 and S1169.

The protein belongs to the TRAFAC class myosin-kinesin ATPase superfamily. Kinesin family. KLP2 subfamily. In terms of assembly, interacts with MKI67 and TPX2. As to expression, expressed in brain (neurons in the external germinal layer of the cerebellum and in ventricular zones) (at protein level). Expressed in spleen and testis.

It localises to the cytoplasm. The protein resides in the cytoskeleton. It is found in the spindle. Plus-end directed kinesin-like motor enzyme involved in mitotic spindle assembly. This is Kinesin-like protein KIF15 (Kif15) from Mus musculus (Mouse).